The primary structure comprises 1034 residues: MIKRTSLSFACLSFFYLSTISILQANETDTLQFRRFTFSDREIQFVLDPASLITAQNIVLSNLQSNGTGACTISGNTQTQIFSNSVNTTADSGGAFDMVTTSFTASDNANLLFCNNYCTHNKGGGAIRSGGPIRFLNNQDVLFYNNISAGAKYVGTGDHNEKNRGGALYATTITLTGNRTLAFINNMSGDCGGAISADTQISITDTVKGILFENNHTLNHIPYTQAENMARGGAICSRRDLCSISNNSGPIVFNYNQGGKGGAISATRCVIDNNKERIIFSNNSSLGWSQSSSASNGGAIQTTQGFTLRNNKGSIYFDSNTATHAGGAINCGYIDIRDNGPVYFLNNSAAWGAAFNLSKPRSATNYIHTGTGDIVFNNNVVFTLDGNLLGKRKLFHINNNEITPYTLSLGAKKDTRIYFYDLFQWERVKENTSNNPPSPTSRNTITVNPETEFSGAVVFSYNQMSSDIRTLMGKEHNYIKEAPTTLKFGTLAIEDDAELEIFNIPFTQNPTSLLALGSGATLTVGKHGKLNITNLGVILPIILKEGKSPPCIRVNPQDMTQNTGTGQTPSSTSSISTPMIIFNGRLSIVDENYESVYDSMDLSRGKAEQLILSIETTNDGQLDSNWQSSLNTSLLSPPHYGYQGLWTPNWITTTYTITLNNNSSAPTSATSIAEQKKTSETFTPSNTTTASIPNIKASAGSGSGSASNSGEVTITKHTLVVNWAPVGYIVDPIRRGDLIANSLVHSGRNMTMGLRSLLPDNSWFALQGAATTLFTKQQKRLSYHGYSSASKGYTVSSQASGAHGHKFLLSFSQSSDKMKEKETNNRLSSRYYLSALCFEHPMFDRIALIGAAACNYGTHNMRSFYGTKKSSKGKFHSTTLGASLRCELRDSMPLRSIMLTPFAQALFSRTEPASIRESGDLARLFTLEQAHTAVVSPIGIKGAYSSDTWPTLSWEMELAYQPTLYWKRPLLNTLLIQNNGSWVTTNTPLAKHSFYGRGSHSLKFSHLKLFANYQAEVATSTVSHYINAGGALVF.

Residues 1-25 form the signal peptide; the sequence is MIKRTSLSFACLSFFYLSTISILQA. 2 stretches are compositionally biased toward low complexity: residues 664–673 and 680–709; these read SAPTSATSIA and ETFT…ASNS. The interval 664 to 709 is disordered; sequence SAPTSATSIAEQKKTSETFTPSNTTTASIPNIKASAGSGSGSASNS. Residues 755 to 1034 enclose the Autotransporter domain; it reads RSLLPDNSWF…YINAGGALVF (280 aa).

This sequence belongs to the PMP outer membrane protein family.

The protein localises to the secreted. It localises to the cell wall. The protein resides in the cell outer membrane. The sequence is that of Probable outer membrane protein PmpF (pmpF) from Chlamydia trachomatis serovar D (strain ATCC VR-885 / DSM 19411 / UW-3/Cx).